We begin with the raw amino-acid sequence, 309 residues long: MTTFIPIIFSSVVVVLFVIGNFANGFIALVNSIERVKRQKISFADQILTALAVSRVGLLWVLLLNWYSTVFNPAFYSVEVRTTAYNVWAVTGHFSNWLATSLSIFYLLKIANFSNLIFLHLKRRVKSVILVMLLGPLLFLACQLFVINMKEIVRTKEYEGNLTWKIKLRSAVYLSDATVTTLGNLVPFTLTLLCFLLLICSLCKHLKKMQLHGKGSQDPSTKVHIKALQTVIFFLLLCAVYFLSIMISVWSFGSLENKPVFMFCKAIRFSYPSIHPFILIWGNKKLKQTFLSVLRQVRYWVKGEKPSSP.

Residues 1-2 (MT) are Extracellular-facing. The chain crosses the membrane as a helical span at residues 3-23 (TFIPIIFSSVVVVLFVIGNFA). The Cytoplasmic segment spans residues 24-55 (NGFIALVNSIERVKRQKISFADQILTALAVSR). A helical membrane pass occupies residues 56–76 (VGLLWVLLLNWYSTVFNPAFY). Residues 77-100 (SVEVRTTAYNVWAVTGHFSNWLAT) lie on the Extracellular side of the membrane. The helical transmembrane segment at 101–121 (SLSIFYLLKIANFSNLIFLHL) threads the bilayer. Residues 122–126 (KRRVK) lie on the Cytoplasmic side of the membrane. Residues 127 to 147 (SVILVMLLGPLLFLACQLFVI) traverse the membrane as a helical segment. Over 148-181 (NMKEIVRTKEYEGNLTWKIKLRSAVYLSDATVTT) the chain is Extracellular. An N-linked (GlcNAc...) asparagine glycan is attached at Asn161. A helical membrane pass occupies residues 182-202 (LGNLVPFTLTLLCFLLLICSL). The Cytoplasmic segment spans residues 203–229 (CKHLKKMQLHGKGSQDPSTKVHIKALQ). Residues 230 to 250 (TVIFFLLLCAVYFLSIMISVW) traverse the membrane as a helical segment. At 251–259 (SFGSLENKP) the chain is on the extracellular side. The helical transmembrane segment at 260–280 (VFMFCKAIRFSYPSIHPFILI) threads the bilayer. Over 281–309 (WGNKKLKQTFLSVLRQVRYWVKGEKPSSP) the chain is Cytoplasmic.

This sequence belongs to the G-protein coupled receptor T2R family. In terms of tissue distribution, expressed in subsets of taste receptor cells of the tongue and exclusively in gustducin-positive cells.

It localises to the membrane. Receptor that may play a role in the perception of bitterness and is gustducin-linked. May play a role in sensing the chemical composition of the gastrointestinal content. The activity of this receptor may stimulate alpha gustducin, mediate PLC-beta-2 activation and lead to the gating of TRPM5. Activated by the sulfonyl amide sweeteners saccharin and acesulfame K. The chain is Taste receptor type 2 member 31 (TAS2R31) from Homo sapiens (Human).